The primary structure comprises 79 residues: Acyl carrier protein (79 aa).

A Carrier domain is found at 2–77 (ADHASKIKDI…DAVAYLEAKV (76 aa)). O-(pantetheine 4'-phosphoryl)serine is present on S37.

It belongs to the acyl carrier protein (ACP) family. Post-translationally, 4'-phosphopantetheine is transferred from CoA to a specific serine of apo-ACP by AcpS. This modification is essential for activity because fatty acids are bound in thioester linkage to the sulfhydryl of the prosthetic group.

The protein localises to the cytoplasm. Its pathway is lipid metabolism; fatty acid biosynthesis. In terms of biological role, carrier of the growing fatty acid chain in fatty acid biosynthesis. The protein is Acyl carrier protein of Gemmatimonas aurantiaca (strain DSM 14586 / JCM 11422 / NBRC 100505 / T-27).